Reading from the N-terminus, the 56-residue chain is Per os infectivity factor AC110 (56 aa).

In terms of biological role, plays an essential role in the process of oral infection. May participate in the crossing of occlusion-derived virions through the host peritrophic membrane during oral infection. In Autographa californica nuclear polyhedrosis virus (AcMNPV), this protein is Per os infectivity factor AC110.